Here is an 883-residue protein sequence, read N- to C-terminus: Translation initiation factor IF-2 (883 aa).

Polar residues predominate over residues 32-45; sequence NDLNGKNNSNSSIN. Disordered regions lie at residues 32-216 and 251-275; these read NDLN…QNKY and RKLG…AETE. Positions 46 to 62 are enriched in basic and acidic residues; it reads LDKHNNKVEYSQNRDNR. The segment covering 75-216 has biased composition (polar residues); it reads GGYSQNRDNR…VGKNTSQNKY (142 aa). The segment covering 251-260 has biased composition (basic and acidic residues); that stretch reads RKLGEKKKQQ. The tr-type G domain maps to 381-554; that stretch reads EKPPVITIMG…DMMLLKANPS (174 aa). The segment at 390–397 is G1; sequence GHVDHGKT. 390 to 397 provides a ligand contact to GTP; sequence GHVDHGKT. The interval 415-419 is G2; sequence GITQH. Residues 436-439 form a G3 region; sequence DTPG. GTP is bound by residues 436–440 and 490–493; these read DTPGH and NKID. The interval 490-493 is G4; it reads NKID. Residues 526 to 528 are G5; the sequence is SAL.

This sequence belongs to the TRAFAC class translation factor GTPase superfamily. Classic translation factor GTPase family. IF-2 subfamily.

It is found in the cytoplasm. In terms of biological role, one of the essential components for the initiation of protein synthesis. Protects formylmethionyl-tRNA from spontaneous hydrolysis and promotes its binding to the 30S ribosomal subunits. Also involved in the hydrolysis of GTP during the formation of the 70S ribosomal complex. The polypeptide is Translation initiation factor IF-2 (Borrelia garinii subsp. bavariensis (strain ATCC BAA-2496 / DSM 23469 / PBi) (Borreliella bavariensis)).